A 150-amino-acid chain; its full sequence is Histone H3-like centromeric protein A (150 aa).

Residues 1–56 form a disordered region; sequence MRPGSTPASRRKSRPPRRVSPPLPTTSTRSPGRPSAPEQRKAPRATPKKRFRPGTR. Residues 25 to 37 are compositionally biased toward low complexity; sequence TTSTRSPGRPSAP. Residues 42–53 show a composition bias toward basic residues; sequence APRATPKKRFRP. The H3-like stretch occupies residues 53–150; that stretch reads PGTRALMEIR…RIRGVTEGLG (98 aa).

This sequence belongs to the histone H3 family. In terms of assembly, component of centromeric nucleosomes, where DNA is wrapped around a histone octamer core. The octamer contains two molecules each of H2A, H2B, CENPA and H4 assembled in one CENPA-H4 heterotetramer and two H2A-H2B heterodimers. CENPA modulates the DNA-binding characteristics of nucleosomes so that protruding DNA ends have higher flexibility than in nucleosomes containing conventional histone H3.

It is found in the nucleus. Its subcellular location is the chromosome. The protein localises to the centromere. Histone H3-like nucleosomal protein that is specifically found in centromeric nucleosomes. Replaces conventional H3 in the nucleosome core of centromeric chromatin that serves as an assembly site for the inner kinetochore. The presence of CENPA subtly modifies the nucleosome structure and the way DNA is wrapped around the nucleosome and gives rise to protruding DNA ends that are less well-ordered and rigid compared to nucleosomes containing histone H3. May serve as an epigenetic mark that propagates centromere identity through replication and cell division. Required for recruitment and assembly of kinetochore proteins, and as a consequence required for progress through mitosis, chromosome segregation and cytokinesis. The chain is Histone H3-like centromeric protein A (cenpa) from Xenopus tropicalis (Western clawed frog).